Consider the following 139-residue polypeptide: uncharacterized protein (139 aa).

This is an uncharacterized protein from Halalkalibacterium halodurans (strain ATCC BAA-125 / DSM 18197 / FERM 7344 / JCM 9153 / C-125) (Bacillus halodurans).